A 131-amino-acid polypeptide reads, in one-letter code: UPF0102 protein RPD_0400 (131 aa).

Belongs to the UPF0102 family.

This is UPF0102 protein RPD_0400 from Rhodopseudomonas palustris (strain BisB5).